We begin with the raw amino-acid sequence, 127 residues long: Venom protein family 16 protein 1 (127 aa).

Residues Met1–Ser18 form the signal peptide.

In terms of tissue distribution, expressed by the venom gland (anterior main gland) (at protein level).

The protein resides in the secreted. In Platymeris rhadamanthus (Red spot assassin bug), this protein is Venom protein family 16 protein 1.